A 260-amino-acid chain; its full sequence is Snake venom serine protease homolog 2 (260 aa).

The signal sequence occupies residues 1-18 (MVLIRVLANLLVLQLSYA). Positions 19–24 (QKSSEL) are excised as a propeptide. A Peptidase S1 domain is found at 25-251 (VIGGDECNIN…YTDWIQSIIA (227 aa)). 6 cysteine pairs are disulfide-bonded: C31-C165, C52-C68, C100-C258, C144-C212, C176-C191, and C202-C227. N123 carries N-linked (GlcNAc...) asparagine glycosylation. Residue N253 is glycosylated (N-linked (GlcNAc...) asparagine).

It belongs to the peptidase S1 family. Snake venom subfamily. In terms of tissue distribution, expressed by the venom gland.

It is found in the secreted. Its function is as follows. Snake venom serine protease homolog that may act in the hemostasis system of the prey. The chain is Snake venom serine protease homolog 2 from Macrovipera lebetinus (Levantine viper).